Reading from the N-terminus, the 155-residue chain is uncharacterized protein (155 aa).

Positions 1-19 (MPLSKTLVQKLQQAGMAIA) are cleaved as a signal peptide.

This is an uncharacterized protein from Haemophilus influenzae (strain ATCC 51907 / DSM 11121 / KW20 / Rd).